The primary structure comprises 607 residues: Aspartate--tRNA(Asp/Asn) ligase (607 aa).

Glu168 contributes to the L-aspartate binding site. The interval 192–195 (QLFK) is aspartate. Arg214 lines the L-aspartate pocket. Residues 214 to 216 (RDE) and Gln223 each bind ATP. Position 449 (His449) interacts with L-aspartate. Residue Glu483 participates in ATP binding. L-aspartate is bound at residue Arg490. 535–538 (GWDR) contributes to the ATP binding site. The interval 578-607 (LEAGVDARPKPEARAQAGTAGPAAPVADPT) is disordered. The span at 580–590 (AGVDARPKPEA) shows a compositional bias: basic and acidic residues. Over residues 591-607 (RAQAGTAGPAAPVADPT) the composition is skewed to low complexity.

Belongs to the class-II aminoacyl-tRNA synthetase family. Type 1 subfamily. In terms of assembly, homodimer.

Its subcellular location is the cytoplasm. It catalyses the reaction tRNA(Asx) + L-aspartate + ATP = L-aspartyl-tRNA(Asx) + AMP + diphosphate. In terms of biological role, aspartyl-tRNA synthetase with relaxed tRNA specificity since it is able to aspartylate not only its cognate tRNA(Asp) but also tRNA(Asn). Reaction proceeds in two steps: L-aspartate is first activated by ATP to form Asp-AMP and then transferred to the acceptor end of tRNA(Asp/Asn). The polypeptide is Aspartate--tRNA(Asp/Asn) ligase (Salinispora tropica (strain ATCC BAA-916 / DSM 44818 / JCM 13857 / NBRC 105044 / CNB-440)).